Reading from the N-terminus, the 498-residue chain is ATP synthase subunit beta, chloroplastic (498 aa).

172-179 (GGAGVGKT) serves as a coordination point for ATP.

The protein belongs to the ATPase alpha/beta chains family. In terms of assembly, F-type ATPases have 2 components, CF(1) - the catalytic core - and CF(0) - the membrane proton channel. CF(1) has five subunits: alpha(3), beta(3), gamma(1), delta(1), epsilon(1). CF(0) has four main subunits: a(1), b(1), b'(1) and c(9-12).

It localises to the plastid. The protein resides in the chloroplast thylakoid membrane. It carries out the reaction ATP + H2O + 4 H(+)(in) = ADP + phosphate + 5 H(+)(out). In terms of biological role, produces ATP from ADP in the presence of a proton gradient across the membrane. The catalytic sites are hosted primarily by the beta subunits. This is ATP synthase subunit beta, chloroplastic from Spinacia oleracea (Spinach).